A 323-amino-acid chain; its full sequence is tRNA U34 carboxymethyltransferase (323 aa).

Carboxy-S-adenosyl-L-methionine-binding positions include Lys91, Trp105, Lys110, Gly130, 152 to 154 (DPT), 181 to 182 (IE), Met196, Tyr200, and Arg315.

It belongs to the class I-like SAM-binding methyltransferase superfamily. CmoB family. Homotetramer.

The enzyme catalyses carboxy-S-adenosyl-L-methionine + 5-hydroxyuridine(34) in tRNA = 5-carboxymethoxyuridine(34) in tRNA + S-adenosyl-L-homocysteine + H(+). Functionally, catalyzes carboxymethyl transfer from carboxy-S-adenosyl-L-methionine (Cx-SAM) to 5-hydroxyuridine (ho5U) to form 5-carboxymethoxyuridine (cmo5U) at position 34 in tRNAs. The protein is tRNA U34 carboxymethyltransferase of Salmonella gallinarum (strain 287/91 / NCTC 13346).